Consider the following 400-residue polypeptide: uncharacterized protein (400 aa).

Residue 36 to 43 coordinates ATP; the sequence is GSINSGKT.

Belongs to the archaeal ATPase family.

This is an uncharacterized protein from Methanocaldococcus jannaschii (strain ATCC 43067 / DSM 2661 / JAL-1 / JCM 10045 / NBRC 100440) (Methanococcus jannaschii).